The sequence spans 328 residues: Malate dehydrogenase (328 aa).

An NAD(+)-binding site is contributed by 12–18 (GAAGQIG). Residues arginine 95 and arginine 101 each coordinate substrate. NAD(+) contacts are provided by residues asparagine 108, glutamine 115, and 132-134 (VGN). Residues asparagine 134 and arginine 165 each coordinate substrate. Histidine 190 serves as the catalytic Proton acceptor.

It belongs to the LDH/MDH superfamily. MDH type 2 family.

The catalysed reaction is (S)-malate + NAD(+) = oxaloacetate + NADH + H(+). Functionally, catalyzes the reversible oxidation of malate to oxaloacetate. The chain is Malate dehydrogenase from Polaromonas sp. (strain JS666 / ATCC BAA-500).